The primary structure comprises 38 residues: Photosystem II reaction center protein L (38 aa).

A helical membrane pass occupies residues 17 to 37; it reads SLFWGLLLIFVLAVLFSNYFF.

The protein belongs to the PsbL family. In terms of assembly, PSII is composed of 1 copy each of membrane proteins PsbA, PsbB, PsbC, PsbD, PsbE, PsbF, PsbH, PsbI, PsbJ, PsbK, PsbL, PsbM, PsbT, PsbX, PsbY, PsbZ, Psb30/Ycf12, at least 3 peripheral proteins of the oxygen-evolving complex and a large number of cofactors. It forms dimeric complexes.

The protein localises to the plastid. The protein resides in the chloroplast thylakoid membrane. One of the components of the core complex of photosystem II (PSII). PSII is a light-driven water:plastoquinone oxidoreductase that uses light energy to abstract electrons from H(2)O, generating O(2) and a proton gradient subsequently used for ATP formation. It consists of a core antenna complex that captures photons, and an electron transfer chain that converts photonic excitation into a charge separation. This subunit is found at the monomer-monomer interface and is required for correct PSII assembly and/or dimerization. This chain is Photosystem II reaction center protein L, found in Chaetosphaeridium globosum (Charophycean green alga).